Here is a 212-residue protein sequence, read N- to C-terminus: MKPLTTVDGLVLPLDRSNVDTDAIIPKQYLKSVKRTGFGPNLFDDWRYLEPGEPGMDHSARKPNPDFVLNAPRYQGAEILLARKNFGCGSSREHAVWALTDYGIRVVIAPSFADIFFGNSFKNGLLPIVLDEAVVDRLFQEVEATEGYRLKVDLAEQTVTTPSGEAFPFEVGEFHKYCLLNGLDDIGLTLQHADEIRAYEQRRRAEAPWLFR.

The protein belongs to the LeuD family. LeuD type 1 subfamily. In terms of assembly, heterodimer of LeuC and LeuD.

It catalyses the reaction (2R,3S)-3-isopropylmalate = (2S)-2-isopropylmalate. It participates in amino-acid biosynthesis; L-leucine biosynthesis; L-leucine from 3-methyl-2-oxobutanoate: step 2/4. Functionally, catalyzes the isomerization between 2-isopropylmalate and 3-isopropylmalate, via the formation of 2-isopropylmaleate. This is 3-isopropylmalate dehydratase small subunit from Thioalkalivibrio sulfidiphilus (strain HL-EbGR7).